The chain runs to 151 residues: FIS1-related protein fis-2 (151 aa).

The chain crosses the membrane as a helical span at residues 126 to 146 (LIGAAIVGGGALALAGLVAIF).

This sequence belongs to the FIS1 family.

The protein resides in the mitochondrion outer membrane. It localises to the peroxisome membrane. Its subcellular location is the mitochondrion. Its function is as follows. Involved in the fragmentation of the mitochondrial network. Involved in perinuclear clustering of the mitochondrial network. May act, redundantly with fis-1, downstream of mitochondrial fission, before the fission products participate in mitochondrial homeostasis, mitophagy, or apoptosis. Plays a role in apoptosis by promoting mitochondrial elimination and cell-death execution, acting downstream of caspase ced-3, and perhaps independently of dynamin GTPase drp-1, caspase ced-9 and apoptosis-inducing factor AIFM/wah-1. This chain is FIS1-related protein fis-2, found in Caenorhabditis elegans.